We begin with the raw amino-acid sequence, 105 residues long: UPF0473 protein SAK_2028 (105 aa).

The protein belongs to the UPF0473 family.

The chain is UPF0473 protein SAK_2028 from Streptococcus agalactiae serotype Ia (strain ATCC 27591 / A909 / CDC SS700).